Reading from the N-terminus, the 54-residue chain is MAVPKKRTSISKKRIRKNIWKRKGYGAALKALSLGKSLSTGSSKSFFVRQTNKS.

Belongs to the bacterial ribosomal protein bL32 family.

It is found in the plastid. The protein localises to the chloroplast. The sequence is that of Large ribosomal subunit protein bL32c from Helianthus annuus (Common sunflower).